The chain runs to 333 residues: MQSWDPCLTPLELHGALFLHGPYWTPGLFRLIALGTCGDSCTHVRQPPKTWMGATVFVQPLDLVKNRMQLSGEGAKTREYKTSFHALTSILRAEGLRGIYTGLSAGLLRQATYTTTRLGIYTVLFERLTGADGTPPGFLLKALIGMTAGATGAFVGTPAEVALIRMTADGRLPPDQRRGYKNVFDALIRIVREEGVPTLWRGCIPTMARAVVVNAAQLASYSQSKQFLLDSGYFSDNILCHFCASMISGLVTTAASMPVDIAKTRIQNMRTIDGKPEYKNGLDVLVKVIRYEGFFSLWKGFTPYYARLGPHTVLTFIFLEQMNKAYKRLFLSG.

Solcar repeat units lie at residues 29-127 (FRLI…LFER), 136-227 (PGFL…SKQF), and 236-325 (DNIL…MNKA). 6 helical membrane passes run 30–61 (RLIA…VQPL), 102–120 (GLSA…RLGI), 138–159 (FLLK…GTPA), 202–221 (GCIP…LASY), 241–259 (HFCA…SMPV), and 300–319 (GFTP…FIFL).

Belongs to the mitochondrial carrier (TC 2.A.29) family. As to quaternary structure, interacts with SMIM26.

The protein localises to the membrane. It catalyses the reaction (S)-malate(in) + 2-oxoglutarate(out) = (S)-malate(out) + 2-oxoglutarate(in). The enzyme catalyses malonate(in) + 2-oxoglutarate(out) = malonate(out) + 2-oxoglutarate(in). The catalysed reaction is succinate(in) + 2-oxoglutarate(out) = succinate(out) + 2-oxoglutarate(in). It carries out the reaction maleate(in) + 2-oxoglutarate(out) = maleate(out) + 2-oxoglutarate(in). It catalyses the reaction oxaloacetate(in) + 2-oxoglutarate(out) = oxaloacetate(out) + 2-oxoglutarate(in). Functionally, catalyzes the transport of 2-oxoglutarate (alpha-oxoglutarate) across the inner mitochondrial membrane in an electroneutral exchange for malate. Can also exchange 2-oxoglutarate for other dicarboxylic acids such as malonate, succinate, maleate and oxaloacetate, although with lower affinity. Contributes to several metabolic processes, including the malate-aspartate shuttle, the oxoglutarate/isocitrate shuttle, in gluconeogenesis from lactate, and in nitrogen metabolism. Maintains mitochondrial fusion and fission events, and the organization and morphology of cristae. Involved in the regulation of apoptosis. Helps protect from cytotoxic-induced apoptosis by modulating glutathione levels in mitochondria. The polypeptide is Mitochondrial 2-oxoglutarate/malate carrier protein (SLC25A11) (Sus scrofa (Pig)).